The following is a 320-amino-acid chain: Glycerol-3-phosphate dehydrogenase [NAD(P)+] (320 aa).

Serine 14, phenylalanine 15, arginine 35, and lysine 109 together coordinate NADPH. 2 residues coordinate sn-glycerol 3-phosphate: lysine 109 and glycine 137. Alanine 141 is an NADPH binding site. Sn-glycerol 3-phosphate is bound by residues lysine 192, aspartate 248, serine 258, arginine 259, and asparagine 260. Residue lysine 192 is the Proton acceptor of the active site. Arginine 259 provides a ligand contact to NADPH. NADPH contacts are provided by leucine 283 and glutamate 285.

The protein belongs to the NAD-dependent glycerol-3-phosphate dehydrogenase family.

The protein resides in the cytoplasm. It carries out the reaction sn-glycerol 3-phosphate + NAD(+) = dihydroxyacetone phosphate + NADH + H(+). The enzyme catalyses sn-glycerol 3-phosphate + NADP(+) = dihydroxyacetone phosphate + NADPH + H(+). The protein operates within membrane lipid metabolism; glycerophospholipid metabolism. Functionally, catalyzes the reduction of the glycolytic intermediate dihydroxyacetone phosphate (DHAP) to sn-glycerol 3-phosphate (G3P), the key precursor for phospholipid synthesis. The chain is Glycerol-3-phosphate dehydrogenase [NAD(P)+] from Rickettsia typhi (strain ATCC VR-144 / Wilmington).